The following is a 318-amino-acid chain: Acetaldehyde dehydrogenase 2 (318 aa).

9 to 12 (SGNI) provides a ligand contact to NAD(+). Residue C129 is the Acyl-thioester intermediate of the active site. NAD(+) contacts are provided by residues 160–168 (SAGPGTRAN) and N288.

Belongs to the acetaldehyde dehydrogenase family.

The catalysed reaction is acetaldehyde + NAD(+) + CoA = acetyl-CoA + NADH + H(+). The chain is Acetaldehyde dehydrogenase 2 from Mycolicibacterium vanbaalenii (strain DSM 7251 / JCM 13017 / BCRC 16820 / KCTC 9966 / NRRL B-24157 / PYR-1) (Mycobacterium vanbaalenii).